Consider the following 349-residue polypeptide: Protein-glutamate methylesterase/protein-glutamine glutaminase 3 (349 aa).

A Response regulatory domain is found at 2–119; the sequence is DVLIVDDSPV…HPDFERDVES (118 aa). Asp52 carries the post-translational modification 4-aspartylphosphate. Residues 157 to 340 form the CheB-type methylesterase domain; it reads EGFQPGVIAI…LSPPRIAALL (184 aa). Catalysis depends on residues Ser169, His196, and Asp289.

The protein belongs to the CheB family. Phosphorylated by CheA. Phosphorylation of the N-terminal regulatory domain activates the methylesterase activity.

Its subcellular location is the cytoplasm. The catalysed reaction is [protein]-L-glutamate 5-O-methyl ester + H2O = L-glutamyl-[protein] + methanol + H(+). It catalyses the reaction L-glutaminyl-[protein] + H2O = L-glutamyl-[protein] + NH4(+). Involved in chemotaxis. Part of a chemotaxis signal transduction system that modulates chemotaxis in response to various stimuli. Catalyzes the demethylation of specific methylglutamate residues introduced into the chemoreceptors (methyl-accepting chemotaxis proteins or MCP) by CheR. Also mediates the irreversible deamidation of specific glutamine residues to glutamic acid. This chain is Protein-glutamate methylesterase/protein-glutamine glutaminase 3, found in Hahella chejuensis (strain KCTC 2396).